The sequence spans 287 residues: tRNA (guanine(9)-N1)-methyltransferase (287 aa).

A disordered region spans residues 1–27; it reads MSDTSDLVDGKWQRLPPVPEGMSKSQW. The SAM-dependent MTase TRM10-type domain occupies 79-272; that stretch reads EPRVNRDQVA…SVIPSRKLDP (194 aa). Residues 179-180, glycine 199, 203-207, cysteine 211, leucine 225, and 237-239 each bind S-adenosyl-L-methionine; these read LT, DKNRH, and KVL. Aspartate 203 functions as the Proton acceptor in the catalytic mechanism. Residues 268–278 show a composition bias toward basic and acidic residues; it reads RKLDPVKEKEQ. Positions 268–287 are disordered; the sequence is RKLDPVKEKEQQQQQQQQQQ.

This sequence belongs to the class IV-like SAM-binding methyltransferase superfamily. TRM10 family. In terms of assembly, monomer.

It is found in the cytoplasm. It localises to the nucleus. It carries out the reaction guanosine(9) in tRNA + S-adenosyl-L-methionine = N(1)-methylguanosine(9) in tRNA + S-adenosyl-L-homocysteine + H(+). In terms of biological role, S-adenosyl-L-methionine-dependent guanine N(1)-methyltransferase that catalyzes the formation of N(1)-methylguanine at position 9 (m1G9) in cytoplasmic tRNA. This is tRNA (guanine(9)-N1)-methyltransferase from Candida glabrata (strain ATCC 2001 / BCRC 20586 / JCM 3761 / NBRC 0622 / NRRL Y-65 / CBS 138) (Yeast).